Here is a 251-residue protein sequence, read N- to C-terminus: Hydroxyacylglutathione hydrolase (251 aa).

The Zn(2+) site is built by histidine 53, histidine 55, aspartate 57, histidine 58, histidine 110, aspartate 127, and histidine 165.

The protein belongs to the metallo-beta-lactamase superfamily. Glyoxalase II family. In terms of assembly, monomer. Requires Zn(2+) as cofactor.

It catalyses the reaction an S-(2-hydroxyacyl)glutathione + H2O = a 2-hydroxy carboxylate + glutathione + H(+). Its pathway is secondary metabolite metabolism; methylglyoxal degradation; (R)-lactate from methylglyoxal: step 2/2. Its function is as follows. Thiolesterase that catalyzes the hydrolysis of S-D-lactoyl-glutathione to form glutathione and D-lactic acid. The protein is Hydroxyacylglutathione hydrolase of Salmonella typhi.